A 177-amino-acid polypeptide reads, in one-letter code: MSDDASTLLRTISWFTEPPSVLPEHIGDWLMETSSMTQRLEKYCAQLRVTLCREGFITPQMLGEERDQLPADERYWLREVVLYGDDRPWLFGRTIVPQQTLEGSGAALTKIGNQPLGRYLFEQKSLTRDYIHTGCCEGLWARRSRLCLSGHPLLLTELFLPESPVYYTPGDEGWQVI.

Residues methionine 36, arginine 78, leucine 116, and glutamate 157 each coordinate substrate.

The protein belongs to the UbiC family. Monomer.

The protein resides in the cytoplasm. It carries out the reaction chorismate = 4-hydroxybenzoate + pyruvate. The protein operates within cofactor biosynthesis; ubiquinone biosynthesis. In terms of biological role, removes the pyruvyl group from chorismate, with concomitant aromatization of the ring, to provide 4-hydroxybenzoate (4HB) for the ubiquinone pathway. The polypeptide is Chorismate pyruvate-lyase (Pectobacterium atrosepticum (strain SCRI 1043 / ATCC BAA-672) (Erwinia carotovora subsp. atroseptica)).